The sequence spans 77 residues: U10-lycotoxin-Ls1b (77 aa).

The first 20 residues, 1-20, serve as a signal peptide directing secretion; the sequence is MKLIIFTGLVLFAIVSLIEA. A propeptide spanning residues 21-26 is cleaved from the precursor; sequence EEESGR.

Belongs to the neurotoxin 19 (CSTX) family. 09 (U10-Lctx) subfamily. Contains 4 disulfide bonds. Expressed by the venom gland.

The protein resides in the secreted. This is U10-lycotoxin-Ls1b from Lycosa singoriensis (Wolf spider).